A 376-amino-acid chain; its full sequence is N-acetyldiaminopimelate deacetylase (376 aa).

D69 is an active-site residue. Residue E128 is the Proton acceptor of the active site.

This sequence belongs to the peptidase M20A family. N-acetyldiaminopimelate deacetylase subfamily.

It catalyses the reaction N-acetyl-(2S,6S)-2,6-diaminopimelate + H2O = (2S,6S)-2,6-diaminopimelate + acetate. The protein operates within amino-acid biosynthesis; L-lysine biosynthesis via DAP pathway; LL-2,6-diaminopimelate from (S)-tetrahydrodipicolinate (acetylase route): step 3/3. Its function is as follows. Catalyzes the conversion of N-acetyl-diaminopimelate to diaminopimelate and acetate. This chain is N-acetyldiaminopimelate deacetylase, found in Bacillus cereus (strain B4264).